The primary structure comprises 187 residues: HTH-type transcriptional regulator NfxB (187 aa).

The segment at residues 26–45 is a DNA-binding region (H-T-H motif); sequence LKELAEAAGVSKATLHRFCG.

Its function is as follows. Confers resistance to guinolones. May negatively regulate the expression of genes that are associated with cell permeability to drugs. This is HTH-type transcriptional regulator NfxB (nfxB) from Pseudomonas aeruginosa (strain ATCC 15692 / DSM 22644 / CIP 104116 / JCM 14847 / LMG 12228 / 1C / PRS 101 / PAO1).